A 261-amino-acid chain; its full sequence is Zinc import ATP-binding protein ZnuC (261 aa).

One can recognise an ABC transporter domain in the interval 6–221 (IRLEKVAVRF…PAFVELFGNN (216 aa)). 38–45 (GPNGAGKT) lines the ATP pocket.

Belongs to the ABC transporter superfamily. Zinc importer (TC 3.A.1.15.5) family. In terms of assembly, the complex is composed of two ATP-binding proteins (ZnuC), two transmembrane proteins (ZnuB) and a solute-binding protein (ZnuA).

The protein resides in the cell inner membrane. The enzyme catalyses Zn(2+)(out) + ATP(in) + H2O(in) = Zn(2+)(in) + ADP(in) + phosphate(in) + H(+)(in). In terms of biological role, part of the ABC transporter complex ZnuABC involved in zinc import. Responsible for energy coupling to the transport system. The polypeptide is Zinc import ATP-binding protein ZnuC (Pseudomonas fluorescens (strain Pf0-1)).